The chain runs to 287 residues: ATP synthase gamma chain (287 aa).

Belongs to the ATPase gamma chain family. In terms of assembly, F-type ATPases have 2 components, CF(1) - the catalytic core - and CF(0) - the membrane proton channel. CF(1) has five subunits: alpha(3), beta(3), gamma(1), delta(1), epsilon(1). CF(0) has three main subunits: a, b and c.

Its subcellular location is the cell inner membrane. Produces ATP from ADP in the presence of a proton gradient across the membrane. The gamma chain is believed to be important in regulating ATPase activity and the flow of protons through the CF(0) complex. The chain is ATP synthase gamma chain from Salmonella gallinarum (strain 287/91 / NCTC 13346).